Here is a 301-residue protein sequence, read N- to C-terminus: Dihydroorotate dehydrogenase B (NAD(+)), catalytic subunit (301 aa).

FMN-binding positions include Ser-21 and 45–46 (KS). Residues Lys-45, 69 to 73 (NAVGL), and Asn-125 contribute to the substrate site. An FMN-binding site is contributed by Asn-125. The active-site Nucleophile is Cys-128. Residues Lys-163 and Ile-187 each contribute to the FMN site. 188–189 (NT) is a substrate binding site. FMN is bound by residues Gly-213, 239 to 240 (GG), and 261 to 262 (GT).

The protein belongs to the dihydroorotate dehydrogenase family. Type 1 subfamily. Heterotetramer of 2 PyrK and 2 PyrD type B subunits. FMN serves as cofactor.

Its subcellular location is the cytoplasm. The catalysed reaction is (S)-dihydroorotate + NAD(+) = orotate + NADH + H(+). It participates in pyrimidine metabolism; UMP biosynthesis via de novo pathway; orotate from (S)-dihydroorotate (NAD(+) route): step 1/1. In terms of biological role, catalyzes the conversion of dihydroorotate to orotate with NAD(+) as electron acceptor. The sequence is that of Dihydroorotate dehydrogenase B (NAD(+)), catalytic subunit (pyrD) from Thermoplasma volcanium (strain ATCC 51530 / DSM 4299 / JCM 9571 / NBRC 15438 / GSS1).